We begin with the raw amino-acid sequence, 541 residues long: Halolysin-like extracellular serine protease Nep (541 aa).

A signal peptide (tat-type signal) is located at residues 1–33 (MTRDTNSNVGRRSVLKAASALGAFLGLGGVASA). Positions 34–121 (TPGREPGPKK…DNATYETLEV (88 aa)) are excised as a propeptide. The region spanning 130 to 405 (QYAPQQVNCE…YGRVDAELAV (276 aa)) is the Peptidase S8 domain. Active-site charge relay system residues include Asp157, His198, and Ser351. Positions 403 to 453 (LAVTTDPDNGDDDDDDDDDEDDPGDGECGDETNTATADGELSGGWGGNPSD) are disordered. Residues 410–432 (DNGDDDDDDDDDEDDPGDGECGD) are compositionally biased toward acidic residues.

It belongs to the peptidase S8 family. Monomer. In terms of processing, exported by the Tat system. The position of the signal peptide cleavage has not been experimentally proven. After transport across the membrane, the propeptide is probably processed autocatalytically, yielding the mature fully active protease.

Its subcellular location is the secreted. Its activity is regulated as follows. Dependent on high salt concentrations for activity and stability. Strongly inhibited by the serine protease inhibitors diisopropyl fluorophosphate (DFP), phenylmethyl sulfonylfluoride (PMSF) and chymostatin. Also inhibited by denaturing agents such as SDS, urea, and HCl guanidinium. Activated by thiol-containing reducing agents such as dithiotreitol (DTT) and 2-mercaptoethanol. Its function is as follows. Serine protease that hydrolyzes large proteins such as casein and gelatin. Cleaves preferentially at the carboxyl terminus of Phe, Tyr or Leu. Is also able to catalyze peptide synthesis under different salt concentrations in the presence of dimethyl sulfoxide (DMSO). In Natrialba magadii, this protein is Halolysin-like extracellular serine protease Nep.